Reading from the N-terminus, the 139-residue chain is Nucleoside diphosphate kinase (139 aa).

The ATP site is built by Lys10, Phe58, Arg86, Thr92, Arg104, and Asn114. The active-site Pros-phosphohistidine intermediate is His117.

It belongs to the NDK family. As to quaternary structure, homotetramer. Mg(2+) is required as a cofactor.

It localises to the cytoplasm. It carries out the reaction a 2'-deoxyribonucleoside 5'-diphosphate + ATP = a 2'-deoxyribonucleoside 5'-triphosphate + ADP. The enzyme catalyses a ribonucleoside 5'-diphosphate + ATP = a ribonucleoside 5'-triphosphate + ADP. Major role in the synthesis of nucleoside triphosphates other than ATP. The ATP gamma phosphate is transferred to the NDP beta phosphate via a ping-pong mechanism, using a phosphorylated active-site intermediate. This Nocardia farcinica (strain IFM 10152) protein is Nucleoside diphosphate kinase.